The following is a 286-amino-acid chain: Release factor glutamine methyltransferase (286 aa).

S-adenosyl-L-methionine contacts are provided by residues 121–125 (GTGTG), D144, W172, and N188. A substrate-binding site is contributed by 188-191 (NPPY).

Belongs to the protein N5-glutamine methyltransferase family. PrmC subfamily.

The catalysed reaction is L-glutaminyl-[peptide chain release factor] + S-adenosyl-L-methionine = N(5)-methyl-L-glutaminyl-[peptide chain release factor] + S-adenosyl-L-homocysteine + H(+). In terms of biological role, methylates the class 1 translation termination release factors RF1/PrfA and RF2/PrfB on the glutamine residue of the universally conserved GGQ motif. This chain is Release factor glutamine methyltransferase, found in Vibrio cholerae serotype O1 (strain ATCC 39315 / El Tor Inaba N16961).